Reading from the N-terminus, the 360-residue chain is Thioredoxin domain-containing protein 15 (360 aa).

A signal peptide spans 1 to 32 (MVPAAGRRPPRVMRLLGWWQVLLWVLGLPVRG). Topologically, residues 33–321 (VEVAEESGRL…GPLPSTLIKS (289 aa)) are extracellular. The tract at residues 141–173 (PDREEEYYTEPEVAESDAAPTEDSNNTESLKSP) is disordered. Residues 143–155 (REEEYYTEPEVAE) show a composition bias toward acidic residues. One can recognise a Thioredoxin domain in the interval 153 to 296 (VAESDAAPTE…LKIFIFNQTG (144 aa)). N-linked (GlcNAc...) asparagine glycosylation is found at Asn187, Asn194, Asn206, and Asn293. The chain crosses the membrane as a helical span at residues 322 to 342 (VDWLLVFSLFFLISFIMYATI). At 343 to 360 (RTESIRWLIPGQEQEHVE) the chain is on the cytoplasmic side.

It is found in the cell projection. The protein resides in the cilium membrane. Its function is as follows. Acts as a positive regulator of ciliary hedgehog signaling. Involved in ciliogenesis. The sequence is that of Thioredoxin domain-containing protein 15 (TXNDC15) from Homo sapiens (Human).